We begin with the raw amino-acid sequence, 249 residues long: 6-phosphogluconolactonase 3 (249 aa).

This sequence belongs to the glucosamine/galactosamine-6-phosphate isomerase family. 6-phosphogluconolactonase subfamily.

The protein resides in the cytoplasm. The protein localises to the nucleus. The enzyme catalyses 6-phospho-D-glucono-1,5-lactone + H2O = 6-phospho-D-gluconate + H(+). Its pathway is carbohydrate degradation; pentose phosphate pathway; D-ribulose 5-phosphate from D-glucose 6-phosphate (oxidative stage): step 2/3. Its function is as follows. Hydrolysis of 6-phosphogluconolactone to 6-phosphogluconate. The polypeptide is 6-phosphogluconolactonase 3 (SOL3) (Saccharomyces cerevisiae (strain RM11-1a) (Baker's yeast)).